The following is a 95-amino-acid chain: Integration host factor subunit beta (95 aa).

The protein belongs to the bacterial histone-like protein family. As to quaternary structure, heterodimer of an alpha and a beta chain.

This protein is one of the two subunits of integration host factor, a specific DNA-binding protein that functions in genetic recombination as well as in transcriptional and translational control. The sequence is that of Integration host factor subunit beta from Shewanella amazonensis (strain ATCC BAA-1098 / SB2B).